The chain runs to 134 residues: ATP synthase epsilon chain, chloroplastic (134 aa).

This sequence belongs to the ATPase epsilon chain family. As to quaternary structure, F-type ATPases have 2 components, CF(1) - the catalytic core - and CF(0) - the membrane proton channel. CF(1) has five subunits: alpha(3), beta(3), gamma(1), delta(1), epsilon(1). CF(0) has three main subunits: a, b and c.

It is found in the plastid. Its subcellular location is the chloroplast thylakoid membrane. Produces ATP from ADP in the presence of a proton gradient across the membrane. This chain is ATP synthase epsilon chain, chloroplastic, found in Gracilaria tenuistipitata var. liui (Red alga).